The primary structure comprises 199 residues: 5'-deoxynucleotidase YfbR (199 aa).

Substrate contacts are provided by residues 18–19 (RW) and His33. Residues 30 to 142 (VSEHSLQVAM…VKQADALCAY (113 aa)) form the HD domain. The a divalent metal cation site is built by His33, His68, and Asp69. Substrate is bound by residues Asp69, 77-80 (DLPT), and Asp137. An a divalent metal cation-binding site is contributed by Asp137.

It belongs to the 5DNU family. In terms of assembly, homodimer. The cofactor is a divalent metal cation.

It is found in the cytoplasm. The enzyme catalyses a 2'-deoxyribonucleoside 5'-phosphate + H2O = a 2'-deoxyribonucleoside + phosphate. Its function is as follows. Catalyzes the strictly specific dephosphorylation of 2'-deoxyribonucleoside 5'-monophosphates. The chain is 5'-deoxynucleotidase YfbR from Salmonella typhi.